The chain runs to 312 residues: Glycine--tRNA ligase alpha subunit (312 aa).

It belongs to the class-II aminoacyl-tRNA synthetase family. As to quaternary structure, tetramer of two alpha and two beta subunits.

It localises to the cytoplasm. It catalyses the reaction tRNA(Gly) + glycine + ATP = glycyl-tRNA(Gly) + AMP + diphosphate. The protein is Glycine--tRNA ligase alpha subunit of Nostoc punctiforme (strain ATCC 29133 / PCC 73102).